The sequence spans 310 residues: Protoheme IX farnesyltransferase 2 (310 aa).

9 helical membrane passes run 25 to 45 (PGII…AAKG), 49 to 69 (LVLM…GCAI), 98 to 118 (HVLL…ALFT), 121 to 141 (LALL…SLYM), 145 to 165 (SVYG…VGYC), 176 to 196 (VILL…IAIF), 222 to 242 (IVLY…AGYT), 245 to 265 (AFMA…LKGY), and 277 to 297 (QVFG…ALDF).

The protein belongs to the UbiA prenyltransferase family. Protoheme IX farnesyltransferase subfamily.

It localises to the cell inner membrane. The catalysed reaction is heme b + (2E,6E)-farnesyl diphosphate + H2O = Fe(II)-heme o + diphosphate. It functions in the pathway porphyrin-containing compound metabolism; heme O biosynthesis; heme O from protoheme: step 1/1. In terms of biological role, converts heme B (protoheme IX) to heme O by substitution of the vinyl group on carbon 2 of heme B porphyrin ring with a hydroxyethyl farnesyl side group. This Shewanella sp. (strain MR-4) protein is Protoheme IX farnesyltransferase 2.